Reading from the N-terminus, the 235-residue chain is Cytidylate kinase (235 aa).

Residue 16–24 (GPAASGKST) participates in ATP binding.

It belongs to the cytidylate kinase family. Type 1 subfamily.

It is found in the cytoplasm. It catalyses the reaction CMP + ATP = CDP + ADP. The enzyme catalyses dCMP + ATP = dCDP + ADP. In Chlorobaculum tepidum (strain ATCC 49652 / DSM 12025 / NBRC 103806 / TLS) (Chlorobium tepidum), this protein is Cytidylate kinase.